Consider the following 260-residue polypeptide: Proteasome assembly chaperone 2 (260 aa).

Belongs to the PSMG2 family. Forms a heterodimer with psmg1. Post-translationally, degraded by the proteasome upon completion of 20S proteasome maturation.

The protein resides in the nucleus. Functionally, chaperone protein which promotes assembly of the 20S proteasome as part of a heterodimer with psmg1. The protein is Proteasome assembly chaperone 2 of Danio rerio (Zebrafish).